The following is a 146-amino-acid chain: Large ribosomal subunit protein uL15 (146 aa).

A disordered region spans residues 1–56; it reads MSDIQLNTLKPAEGSKHAKRRVGRGIGSGLGKTAGRGHKGQKSRSGGFHKVGFEGG. The segment covering 24-34 has biased composition (gly residues); sequence RGIGSGLGKTA.

Belongs to the universal ribosomal protein uL15 family. As to quaternary structure, part of the 50S ribosomal subunit.

Functionally, binds to the 23S rRNA. This is Large ribosomal subunit protein uL15 from Bordetella bronchiseptica (strain ATCC BAA-588 / NCTC 13252 / RB50) (Alcaligenes bronchisepticus).